We begin with the raw amino-acid sequence, 233 residues long: Phosphoribosylformylglycinamidine synthase subunit PurQ (233 aa).

The Glutamine amidotransferase type-1 domain maps to serine 3–alanine 233. Cysteine 87 (nucleophile) is an active-site residue. Catalysis depends on residues histidine 204 and glutamate 206.

Part of the FGAM synthase complex composed of 1 PurL, 1 PurQ and 2 PurS subunits.

It localises to the cytoplasm. It catalyses the reaction N(2)-formyl-N(1)-(5-phospho-beta-D-ribosyl)glycinamide + L-glutamine + ATP + H2O = 2-formamido-N(1)-(5-O-phospho-beta-D-ribosyl)acetamidine + L-glutamate + ADP + phosphate + H(+). The enzyme catalyses L-glutamine + H2O = L-glutamate + NH4(+). It functions in the pathway purine metabolism; IMP biosynthesis via de novo pathway; 5-amino-1-(5-phospho-D-ribosyl)imidazole from N(2)-formyl-N(1)-(5-phospho-D-ribosyl)glycinamide: step 1/2. Functionally, part of the phosphoribosylformylglycinamidine synthase complex involved in the purines biosynthetic pathway. Catalyzes the ATP-dependent conversion of formylglycinamide ribonucleotide (FGAR) and glutamine to yield formylglycinamidine ribonucleotide (FGAM) and glutamate. The FGAM synthase complex is composed of three subunits. PurQ produces an ammonia molecule by converting glutamine to glutamate. PurL transfers the ammonia molecule to FGAR to form FGAM in an ATP-dependent manner. PurS interacts with PurQ and PurL and is thought to assist in the transfer of the ammonia molecule from PurQ to PurL. The sequence is that of Phosphoribosylformylglycinamidine synthase subunit PurQ from Rhodopseudomonas palustris (strain BisB18).